A 195-amino-acid chain; its full sequence is Pyridoxal 5'-phosphate synthase subunit PdxT (195 aa).

46–48 (GES) contacts L-glutamine. Catalysis depends on cysteine 78, which acts as the Nucleophile. L-glutamine-binding positions include arginine 105 and 133 to 134 (IR). Catalysis depends on charge relay system residues histidine 169 and glutamate 171.

It belongs to the glutaminase PdxT/SNO family. In terms of assembly, in the presence of PdxS, forms a dodecamer of heterodimers. Only shows activity in the heterodimer.

The enzyme catalyses aldehydo-D-ribose 5-phosphate + D-glyceraldehyde 3-phosphate + L-glutamine = pyridoxal 5'-phosphate + L-glutamate + phosphate + 3 H2O + H(+). The catalysed reaction is L-glutamine + H2O = L-glutamate + NH4(+). It participates in cofactor biosynthesis; pyridoxal 5'-phosphate biosynthesis. In terms of biological role, catalyzes the hydrolysis of glutamine to glutamate and ammonia as part of the biosynthesis of pyridoxal 5'-phosphate. The resulting ammonia molecule is channeled to the active site of PdxS. This chain is Pyridoxal 5'-phosphate synthase subunit PdxT, found in Geobacillus thermodenitrificans (strain NG80-2).